A 274-amino-acid chain; its full sequence is Ribosomal RNA small subunit methyltransferase A (274 aa).

His15, Leu17, Gly42, Glu64, Asp89, and Asn108 together coordinate S-adenosyl-L-methionine.

The protein belongs to the class I-like SAM-binding methyltransferase superfamily. rRNA adenine N(6)-methyltransferase family. RsmA subfamily.

The protein resides in the cytoplasm. The enzyme catalyses adenosine(1518)/adenosine(1519) in 16S rRNA + 4 S-adenosyl-L-methionine = N(6)-dimethyladenosine(1518)/N(6)-dimethyladenosine(1519) in 16S rRNA + 4 S-adenosyl-L-homocysteine + 4 H(+). In terms of biological role, specifically dimethylates two adjacent adenosines (A1518 and A1519) in the loop of a conserved hairpin near the 3'-end of 16S rRNA in the 30S particle. May play a critical role in biogenesis of 30S subunits. This Prochlorococcus marinus (strain MIT 9301) protein is Ribosomal RNA small subunit methyltransferase A.